Here is a 189-residue protein sequence, read N- to C-terminus: MSNIDLLKIEEAVKMILEAVGEDVNREGLLDTPKRVAKMYAEMFSGLHEDAKDYFRTVFHEDHEELVLVKDIPFYSMCEHHLVPFYGKAHVAYIPNDGIVAGLSKLGRAVETIARRPQLQERITSSVADTIMEMLAPKGVYVVIEAEHMCMTMRGLKKPGSKTVTSVARGVYEEDEVKRREVLSFIQMS.

The Zn(2+) site is built by cysteine 78, histidine 81, and cysteine 150.

Belongs to the GTP cyclohydrolase I family. In terms of assembly, homomer.

The catalysed reaction is GTP + H2O = 7,8-dihydroneopterin 3'-triphosphate + formate + H(+). It participates in cofactor biosynthesis; 7,8-dihydroneopterin triphosphate biosynthesis; 7,8-dihydroneopterin triphosphate from GTP: step 1/1. This chain is GTP cyclohydrolase 1, found in Lysinibacillus sphaericus (strain C3-41).